The primary structure comprises 310 residues: tRNA-cytidine(32) 2-sulfurtransferase (310 aa).

Positions 45–50 (SGGKDS) match the PP-loop motif motif. Residues Cys120, Cys123, and Cys211 each coordinate [4Fe-4S] cluster.

It belongs to the TtcA family. Homodimer. It depends on Mg(2+) as a cofactor. [4Fe-4S] cluster serves as cofactor.

The protein localises to the cytoplasm. It catalyses the reaction cytidine(32) in tRNA + S-sulfanyl-L-cysteinyl-[cysteine desulfurase] + AH2 + ATP = 2-thiocytidine(32) in tRNA + L-cysteinyl-[cysteine desulfurase] + A + AMP + diphosphate + H(+). Its pathway is tRNA modification. Its function is as follows. Catalyzes the ATP-dependent 2-thiolation of cytidine in position 32 of tRNA, to form 2-thiocytidine (s(2)C32). The sulfur atoms are provided by the cysteine/cysteine desulfurase (IscS) system. This chain is tRNA-cytidine(32) 2-sulfurtransferase, found in Shewanella putrefaciens (strain CN-32 / ATCC BAA-453).